Consider the following 476-residue polypeptide: Bifunctional protein HldE (476 aa).

The segment at 1–319 (MKLTLPDYDQ…EAIYGSQDSG (319 aa)) is ribokinase. ATP is bound at residue 195-198 (NLSE). Residue Asp-264 is part of the active site. Positions 344–476 (MTNGCFDILH…IIEAIRGGKG (133 aa)) are cytidylyltransferase.

The protein in the N-terminal section; belongs to the carbohydrate kinase PfkB family. In the C-terminal section; belongs to the cytidylyltransferase family. As to quaternary structure, homodimer.

The enzyme catalyses D-glycero-beta-D-manno-heptose 7-phosphate + ATP = D-glycero-beta-D-manno-heptose 1,7-bisphosphate + ADP + H(+). It catalyses the reaction D-glycero-beta-D-manno-heptose 1-phosphate + ATP + H(+) = ADP-D-glycero-beta-D-manno-heptose + diphosphate. It functions in the pathway nucleotide-sugar biosynthesis; ADP-L-glycero-beta-D-manno-heptose biosynthesis; ADP-L-glycero-beta-D-manno-heptose from D-glycero-beta-D-manno-heptose 7-phosphate: step 1/4. Its pathway is nucleotide-sugar biosynthesis; ADP-L-glycero-beta-D-manno-heptose biosynthesis; ADP-L-glycero-beta-D-manno-heptose from D-glycero-beta-D-manno-heptose 7-phosphate: step 3/4. Its function is as follows. Catalyzes the phosphorylation of D-glycero-D-manno-heptose 7-phosphate at the C-1 position to selectively form D-glycero-beta-D-manno-heptose-1,7-bisphosphate. Catalyzes the ADP transfer from ATP to D-glycero-beta-D-manno-heptose 1-phosphate, yielding ADP-D-glycero-beta-D-manno-heptose. The sequence is that of Bifunctional protein HldE from Photobacterium profundum (strain SS9).